Here is a 134-residue protein sequence, read N- to C-terminus: uncharacterized protein (134 aa).

Positions 1–16 (MAKAVALLLAAIAASA) are cleaved as a signal peptide.

This is an uncharacterized protein from Oryza sativa subsp. indica (Rice).